Reading from the N-terminus, the 201-residue chain is LexA repressor 1 (201 aa).

A DNA-binding region (H-T-H motif) is located at residues 27–47 (LAEIAQAFGFASRNAAQKHVQ). Catalysis depends on for autocatalytic cleavage activity residues serine 122 and lysine 159.

Belongs to the peptidase S24 family. In terms of assembly, homodimer.

The catalysed reaction is Hydrolysis of Ala-|-Gly bond in repressor LexA.. Represses a number of genes involved in the response to DNA damage (SOS response), including recA and lexA. In the presence of single-stranded DNA, RecA interacts with LexA causing an autocatalytic cleavage which disrupts the DNA-binding part of LexA, leading to derepression of the SOS regulon and eventually DNA repair. The chain is LexA repressor 1 from Xanthomonas axonopodis pv. citri (strain 306).